A 719-amino-acid chain; its full sequence is Polyribonucleotide nucleotidyltransferase (719 aa).

Mg(2+)-binding residues include Asp491 and Asp497. The 60-residue stretch at 558–617 (PRMLTIKINPEKIRDVIGKGGATIRALTEETGTQIDISDDGTIVIASVDEAQAKEAQRRI) folds into the KH domain. The region spanning 627–695 (GQVYDGSVLR…DKGRLRLSVK (69 aa)) is the S1 motif domain.

The protein belongs to the polyribonucleotide nucleotidyltransferase family. Requires Mg(2+) as cofactor.

The protein localises to the cytoplasm. The enzyme catalyses RNA(n+1) + phosphate = RNA(n) + a ribonucleoside 5'-diphosphate. In terms of biological role, involved in mRNA degradation. Catalyzes the phosphorolysis of single-stranded polyribonucleotides processively in the 3'- to 5'-direction. The chain is Polyribonucleotide nucleotidyltransferase from Bordetella petrii (strain ATCC BAA-461 / DSM 12804 / CCUG 43448).